We begin with the raw amino-acid sequence, 368 residues long: Ethanol acetyltransferase 1 (368 aa).

The N-terminal 21 residues, 1-21, are a transit peptide targeting the mitochondrion; it reads MFLSLRPSLSVSRLAVVRRAY. An AB hydrolase-1 domain is found at 67–171; it reads PIIFFHGLLG…IIDNAPEPQP (105 aa). Residues serine 140, aspartate 164, and histidine 315 each act as charge relay system in the active site. Positions 344 to 368 are disordered; it reads RNKDPNNYMQTQNSISNSDTMGQSL. The span at 348 to 368 shows a compositional bias: polar residues; it reads PNNYMQTQNSISNSDTMGQSL.

This sequence belongs to the AB hydrolase superfamily.

It localises to the mitochondrion. The enzyme catalyses ethanol + acetyl-CoA = ethyl acetate + CoA. The catalysed reaction is acetyl-CoA + H2O = acetate + CoA + H(+). It catalyses the reaction ethyl acetate + H2O = ethanol + acetate + H(+). In terms of biological role, alcohol acetyltransferase that catalyzes the synthesis of ethyl acetate from ethanol and acetyl-CoA. Can also function as a thioesterase by hydrolyzing acetyl-CoA in the absence of ethanol, as well as esterase hydrolyzing ethyl acetate. The chain is Ethanol acetyltransferase 1 (EAT1) from Kluyveromyces lactis (strain ATCC 8585 / CBS 2359 / DSM 70799 / NBRC 1267 / NRRL Y-1140 / WM37) (Yeast).